A 401-amino-acid polypeptide reads, in one-letter code: Nodal homolog 3-C (401 aa).

The first 18 residues, 1 to 18, serve as a signal peptide directing secretion; the sequence is MAFLSLFLCLVFSSPLMA. The propeptide occupies 19–274; the sequence is MPPALQGRKA…KVNGFRRLRR (256 aa). 3 N-linked (GlcNAc...) asparagine glycosylation sites follow: asparagine 168, asparagine 337, and asparagine 344. 2 disulfides stabilise this stretch: cysteine 299–cysteine 365 and cysteine 328–cysteine 396.

This sequence belongs to the TGF-beta family. In terms of assembly, monomer. The propeptide region interacts with bmp4 in a non-covalent manner. As to expression, expressed in the dorsal marginal region of late blastula, becoming restricted to the Spemann organizer at the early gastrula stage.

It is found in the secreted. In terms of biological role, exhibits mesoderm-dorsalizing activity and neural-inducing activity, but lacks mesoderm-inducing activity. Regulates the expression of specific mesodermal and neural genes. Induces convergent extension movements at the embryonic midline by activating the fgf signaling pathway to induce t/bra expression in the organizer region. Acts with wnt11 to induce Spemann organizer cells and induce axis formation. The unprocessed protein antagonizes bmp-signaling. In Xenopus tropicalis (Western clawed frog), this protein is Nodal homolog 3-C.